A 102-amino-acid chain; its full sequence is MTKQKIRIKLKGFDHKILDQSALQIVEALERTGATISGPVPLPTRIQRYSVIRSSFIDKDSQEQFEIRTHKRLIDIVETTSKTIDALTNLNLPAGVSIDIKL.

Belongs to the universal ribosomal protein uS10 family. In terms of assembly, part of the 30S ribosomal subunit.

In terms of biological role, involved in the binding of tRNA to the ribosomes. The polypeptide is Small ribosomal subunit protein uS10 (Dehalococcoides mccartyi (strain ATCC BAA-2266 / KCTC 15142 / 195) (Dehalococcoides ethenogenes (strain 195))).